A 1028-amino-acid polypeptide reads, in one-letter code: Isoleucine--tRNA ligase (1028 aa).

A 'HIGH' region motif is present at residues 51–61 (PTANGRPHIGH). The 'KMSKS' region signature appears at 591–595 (KMSKS). Residue lysine 594 participates in ATP binding.

The protein belongs to the class-I aminoacyl-tRNA synthetase family. IleS type 2 subfamily. As to quaternary structure, monomer. It depends on Zn(2+) as a cofactor.

The protein resides in the cytoplasm. The enzyme catalyses tRNA(Ile) + L-isoleucine + ATP = L-isoleucyl-tRNA(Ile) + AMP + diphosphate. In terms of biological role, catalyzes the attachment of isoleucine to tRNA(Ile). As IleRS can inadvertently accommodate and process structurally similar amino acids such as valine, to avoid such errors it has two additional distinct tRNA(Ile)-dependent editing activities. One activity is designated as 'pretransfer' editing and involves the hydrolysis of activated Val-AMP. The other activity is designated 'posttransfer' editing and involves deacylation of mischarged Val-tRNA(Ile). The chain is Isoleucine--tRNA ligase from Thermoplasma volcanium (strain ATCC 51530 / DSM 4299 / JCM 9571 / NBRC 15438 / GSS1).